The chain runs to 487 residues: 2-aminomuconic semialdehyde dehydrogenase (487 aa).

Position 209–215 (209–215) interacts with NAD(+); it reads GTGPRVG. Catalysis depends on Glu253, which acts as the Proton acceptor. Cys287 acts as the Nucleophile in catalysis. The residue at position 362 (Ser362) is a Phosphoserine.

It belongs to the aldehyde dehydrogenase family. In terms of tissue distribution, highly expressed in adult kidney and liver. Detected at lower levels in fetal liver and kidney.

It is found in the cytoplasm. The enzyme catalyses 2-aminomuconate 6-semialdehyde + NAD(+) + H2O = (2Z,4E)-2-aminomuconate + NADH + 2 H(+). It functions in the pathway amino-acid degradation; L-kynurenine degradation. Functionally, catalyzes the NAD-dependent oxidation of 2-aminomuconic semialdehyde of the kynurenine metabolic pathway in L-tryptophan degradation. The chain is 2-aminomuconic semialdehyde dehydrogenase from Homo sapiens (Human).